Here is a 336-residue protein sequence, read N- to C-terminus: HTH-type transcriptional repressor PurR (336 aa).

The HTH lacI-type domain maps to 2-56; sequence ATIKDVAKLAGVSTTTVSHVINKTRFVAEDTSKAVWDAIQQLNYSPSAVARSLKV. A DNA-binding region (H-T-H motif) is located at residues 4–23; the sequence is IKDVAKLAGVSTTTVSHVIN. Residues 48-56 mediate DNA binding; that stretch reads SAVARSLKV. Hypoxanthine is bound by residues Tyr73, Lys188, Phe219, and Asp273.

Homodimer.

It functions in the pathway purine metabolism; purine nucleotide biosynthesis [regulation]. Is the main repressor of the genes involved in the de novo synthesis of purine nucleotides, regulating purB, purC, purEK, purF, purHD, purL, purMN and guaBA expression. PurR is allosterically activated to bind its cognate DNA by binding the purine corepressors, hypoxanthine or guanine, thereby effecting transcription repression. This chain is HTH-type transcriptional repressor PurR, found in Actinobacillus pleuropneumoniae serotype 3 (strain JL03).